We begin with the raw amino-acid sequence, 388 residues long: Putative F-box protein At3g17490 (388 aa).

One can recognise an F-box domain in the interval 1–46 (MMMPHLSEDLVEEILSRVPAISLKRLRYTCKQWNALFNDQRFSKKH).

This is Putative F-box protein At3g17490 from Arabidopsis thaliana (Mouse-ear cress).